Reading from the N-terminus, the 426-residue chain is Proline--tRNA ligase (426 aa).

The protein belongs to the class-II aminoacyl-tRNA synthetase family. ProS type 2 subfamily. Homodimer.

Its subcellular location is the cytoplasm. The enzyme catalyses tRNA(Pro) + L-proline + ATP = L-prolyl-tRNA(Pro) + AMP + diphosphate. Its function is as follows. Catalyzes the attachment of proline to tRNA(Pro) in a two-step reaction: proline is first activated by ATP to form Pro-AMP and then transferred to the acceptor end of tRNA(Pro). This chain is Proline--tRNA ligase, found in Anaplasma phagocytophilum (strain HZ).